Reading from the N-terminus, the 545-residue chain is Glucose-6-phosphate isomerase (545 aa).

E351 functions as the Proton donor in the catalytic mechanism. Catalysis depends on residues H382 and K510.

It belongs to the GPI family.

Its subcellular location is the cytoplasm. It catalyses the reaction alpha-D-glucose 6-phosphate = beta-D-fructose 6-phosphate. The protein operates within carbohydrate biosynthesis; gluconeogenesis. Its pathway is carbohydrate degradation; glycolysis; D-glyceraldehyde 3-phosphate and glycerone phosphate from D-glucose: step 2/4. In terms of biological role, catalyzes the reversible isomerization of glucose-6-phosphate to fructose-6-phosphate. The sequence is that of Glucose-6-phosphate isomerase from Shewanella baltica (strain OS185).